The following is a 457-amino-acid chain: 3-isopropylmalate dehydratase large subunit (457 aa).

Positions 337, 397, and 400 each coordinate [4Fe-4S] cluster.

The protein belongs to the aconitase/IPM isomerase family. LeuC type 1 subfamily. Heterodimer of LeuC and LeuD. [4Fe-4S] cluster serves as cofactor.

The enzyme catalyses (2R,3S)-3-isopropylmalate = (2S)-2-isopropylmalate. Its pathway is amino-acid biosynthesis; L-leucine biosynthesis; L-leucine from 3-methyl-2-oxobutanoate: step 2/4. Its function is as follows. Catalyzes the isomerization between 2-isopropylmalate and 3-isopropylmalate, via the formation of 2-isopropylmaleate. This Oenococcus oeni (strain ATCC BAA-331 / PSU-1) protein is 3-isopropylmalate dehydratase large subunit.